A 189-amino-acid chain; its full sequence is Small ribosomal subunit protein uS5 (189 aa).

The 64-residue stretch at 22–85 (LIDKLVTINR…ERAKRGMIRV (64 aa)) folds into the S5 DRBM domain. The segment at 164–189 (SVASRRGKKVADLFGPKREKEAPADV) is disordered. Over residues 172-189 (KVADLFGPKREKEAPADV) the composition is skewed to basic and acidic residues.

The protein belongs to the universal ribosomal protein uS5 family. In terms of assembly, part of the 30S ribosomal subunit. Contacts proteins S4 and S8.

Functionally, with S4 and S12 plays an important role in translational accuracy. Its function is as follows. Located at the back of the 30S subunit body where it stabilizes the conformation of the head with respect to the body. The polypeptide is Small ribosomal subunit protein uS5 (Acidiphilium cryptum (strain JF-5)).